Here is a 273-residue protein sequence, read N- to C-terminus: Undecaprenyl-diphosphatase (273 aa).

Helical transmembrane passes span 3–23, 48–68, 92–112, 116–136, 152–172, 193–213, 220–240, and 252–272; these read IVEI…EFAP, AANT…VVVF, MQVI…EDYI, LFST…MIAA, ITYK…WPGF, ADFT…LSLL, TIDA…FALI, and IRLV…YIVY.

The protein belongs to the UppP family.

It localises to the cell membrane. It carries out the reaction di-trans,octa-cis-undecaprenyl diphosphate + H2O = di-trans,octa-cis-undecaprenyl phosphate + phosphate + H(+). Catalyzes the dephosphorylation of undecaprenyl diphosphate (UPP). Confers resistance to bacitracin. The polypeptide is Undecaprenyl-diphosphatase (Geobacillus sp. (strain WCH70)).